The sequence spans 612 residues: Protein MUK1 (612 aa).

Residues 40–50 (EDQNDNERSSC) are compositionally biased toward basic and acidic residues. A disordered region spans residues 40–66 (EDQNDNERSSCDGDENSTTGERLENNK). Polar residues predominate over residues 55–66 (NSTTGERLENNK). Phosphoserine occurs at positions 67, 163, 185, and 245. The VPS9 domain occupies 273–414 (TEYNKLLNEK…VEGLTKNDFS (142 aa)). A disordered region spans residues 494 to 560 (IRSYTPPHPN…SSASLEHGNR (67 aa)). Over residues 503–517 (NNTSNNNLHSSNNLN) the composition is skewed to low complexity. Residues 518–529 (IPRSSSQLSMEL) are compositionally biased toward polar residues. Residues 530 to 542 (SNRDTTEMSRDGS) are compositionally biased toward basic and acidic residues. A compositionally biased stretch (low complexity) spans 543 to 554 (RSTSSSSRSSAS).

Its subcellular location is the cytoplasm. Putative GTPase-activating protein. The protein is Protein MUK1 (MUK1) of Saccharomyces cerevisiae (strain ATCC 204508 / S288c) (Baker's yeast).